Consider the following 98-residue polypeptide: NADH-ubiquinone oxidoreductase chain 4L (98 aa).

Transmembrane regions (helical) follow at residues 1 to 21 (MSLI…GLLM), 26 to 46 (LMSA…FTTL), and 61 to 81 (IILL…LVMI).

This sequence belongs to the complex I subunit 4L family. In terms of assembly, core subunit of respiratory chain NADH dehydrogenase (Complex I) which is composed of 45 different subunits.

The protein resides in the mitochondrion inner membrane. The catalysed reaction is a ubiquinone + NADH + 5 H(+)(in) = a ubiquinol + NAD(+) + 4 H(+)(out). Functionally, core subunit of the mitochondrial membrane respiratory chain NADH dehydrogenase (Complex I) which catalyzes electron transfer from NADH through the respiratory chain, using ubiquinone as an electron acceptor. Part of the enzyme membrane arm which is embedded in the lipid bilayer and involved in proton translocation. This Physeter macrocephalus (Sperm whale) protein is NADH-ubiquinone oxidoreductase chain 4L (MT-ND4L).